Consider the following 193-residue polypeptide: Acyl carrier protein phosphodiesterase (193 aa).

Belongs to the AcpH family.

The catalysed reaction is holo-[ACP] + H2O = apo-[ACP] + (R)-4'-phosphopantetheine + H(+). Functionally, converts holo-ACP to apo-ACP by hydrolytic cleavage of the phosphopantetheine prosthetic group from ACP. This is Acyl carrier protein phosphodiesterase from Salmonella newport (strain SL254).